The primary structure comprises 1021 residues: Ribosome quality control complex subunit 2 (1021 aa).

Residues 348 to 388 are a coiled coil; the sequence is IEAQKLKKRAHDRLATAERRLESAKEDQARKLQSLQDAQAT. Positions 457 to 484 are disordered; the sequence is NPESVDNSDESSETSDDDLDDSDDDNKV. Residues 462–480 show a composition bias toward acidic residues; it reads DNSDESSETSDDDLDDSDD. The residue at position 478 (S478) is a Phosphoserine. Coiled coils occupy residues 507–546 and 698–727; these read NARK…DLKR and DEKS…LKME. Polar residues-rich tracts occupy residues 746-761 and 839-856; these read YNED…TTGS and ISSQ…TPTA. 2 disordered regions span residues 746–801 and 832–905; these read YNED…TALE and HAAR…VESF. The span at 876–905 shows a compositional bias: basic and acidic residues; it reads DQSRNSEAENEKGLSTEQRDEKKHAKVESF.

This sequence belongs to the NEMF family. In terms of assembly, component of the ribosome quality control complex (RQC), composed of the E3 ubiquitin ligase rkr1/ltn1, rqc1 and mtr1/rqc2, as well as cdc48 and its ubiquitin-binding cofactors associated with the 60S ribosomal subunit. RQC2 binds to the 40S-binding surface of tRNAs.

It localises to the cytoplasm. Its function is as follows. Key component of the ribosome quality control complex (RQC), a ribosome-associated complex that mediates the extraction of incompletely synthesized nascent chains from stalled ribosomes as well as their ubiquitin-mediated proteasomal degradation. Thereby, frees 60S subunit ribosomes from the stalled translation complex and prevents the accumulation of nascent polypeptide chains that are potentially toxic for the cell. Within the RQC complex, mtr1/rqc2 specifically binds stalled 60S ribosomal subunits by recognizing an exposed, nascent chain-conjugated tRNA moiety and promotes the recruitment of rkr1/ltn1 to stalled 60S subunits. Following binding to stalled 60S ribosomal subunits, mtr1/rqc2 mediates CAT tailing by recruiting alanine- and threonine-charged tRNA to the A-site and directing the elongation of stalled nascent chains independently of mRNA or 40S subunits, leading to non-templated C-terminal Ala and Thr extensions (CAT tails). CAT tails promote the rkr1/ltn1-mediated ubiquitination of incompletely synthesized nascent polypeptides: CAT tailing facilitates rkr1/ltn1-dependent ubiquitination by exposing lysine residues that would otherwise remain buried in the ribosomal exit tunnel. Following ubiquitination, incompletely synthesized nascent polypeptides are recognized by CDC48 and degraded by the proteasome. CAT-tailed proteins tend to aggregate and sequester chaperones and can induce proteotoxic stress; their rkr1/ltn1-dependent ubiquitination and degradation is required to prevent proteotoxic stress. This chain is Ribosome quality control complex subunit 2, found in Schizosaccharomyces pombe (strain 972 / ATCC 24843) (Fission yeast).